The following is a 271-amino-acid chain: Calcium-binding protein 4 (271 aa).

The segment at 1–105 (MATEHNVQLV…RSDPQQDAAQ (105 aa)) is disordered. S37 carries the phosphoserine; by PKC/PRKCZ modification. Over residues 45-67 (GSQKASSGDQSSSQGSEASGSSK) the composition is skewed to low complexity. The segment covering 87–96 (ASHRHSHRHR) has biased composition (basic residues). EF-hand domains are found at residues 125–160 (EELEELQAAFEEFDTDQDGYIGYRELGDCMRTLGYM), 179–196 (GFVDFEEFVELISPKLRE), 202–237 (LGVRELRIAFREFDKDRDGRITVAELRQAAPALLGE), and 239–271 (LEGTELDEMLREMDLNGDGTIDFDEFVMMLSTG). The Ca(2+) site is built by D138, D140, D142, Y144, and E149. 10 residues coordinate Ca(2+): D215, D217, D219, R221, E226, D252, N254, D256, T258, and E263.

Interacts with CACNA1F and CACNA1D (via IQ domain) in a calcium independent manner. Interacts (via N-terminus) with UNC119. Post-translationally, phosphorylated. Phosphorylation levels change with the light conditions and regulate the activity, but has no effect on calcium binding. As to expression, expressed in retina and in the inner hair cells (IHC) of the cochlea.

The protein resides in the cytoplasm. Its subcellular location is the presynapse. Involved in normal synaptic function through regulation of Ca(2+) influx and neurotransmitter release in photoreceptor synaptic terminals and in auditory transmission. Modulator of CACNA1D and CACNA1F, suppressing the calcium-dependent inactivation and shifting the activation range to more hyperpolarized voltages. This chain is Calcium-binding protein 4 (Cabp4), found in Mus musculus (Mouse).